The following is a 244-amino-acid chain: UPF0246 protein FMG_1068 (244 aa).

The protein belongs to the UPF0246 family.

This is UPF0246 protein FMG_1068 from Finegoldia magna (strain ATCC 29328 / DSM 20472 / WAL 2508) (Peptostreptococcus magnus).